Consider the following 847-residue polypeptide: Pep5-like zinc finger protein C16A10.03c (847 aa).

One copy of the CHCR repeat lies at 387-526 (YIEAIPFSDS…GIWLFNSDPM (140 aa)). The RING-type; atypical zinc-finger motif lies at 780-814 (CDNCEGLLDVPFVSYSCLHLVHRDCATETVCPKCK).

It localises to the cytoplasm. The protein resides in the nucleus. This Schizosaccharomyces pombe (strain 972 / ATCC 24843) (Fission yeast) protein is Pep5-like zinc finger protein C16A10.03c.